A 132-amino-acid chain; its full sequence is Large ribosomal subunit protein bL12 (132 aa).

Belongs to the bacterial ribosomal protein bL12 family. In terms of assembly, homodimer. Part of the ribosomal stalk of the 50S ribosomal subunit. Forms a multimeric L10(L12)X complex, where L10 forms an elongated spine to which 2 to 4 L12 dimers bind in a sequential fashion. Binds GTP-bound translation factors.

Its function is as follows. Forms part of the ribosomal stalk which helps the ribosome interact with GTP-bound translation factors. Is thus essential for accurate translation. This Ehrlichia canis (strain Jake) protein is Large ribosomal subunit protein bL12.